Here is a 342-residue protein sequence, read N- to C-terminus: S-methyl-5'-thioadenosine phosphorylase (342 aa).

Residues Thr-51, 99-100 (RH), and 132-133 (SA) contribute to the phosphate site. Substrate is bound at residue Met-234. Ser-235 is a binding site for phosphate. Substrate is bound at residue 258–260 (DYD).

This sequence belongs to the PNP/MTAP phosphorylase family. MTAP subfamily. In terms of assembly, homotrimer.

Its subcellular location is the cytoplasm. The protein localises to the nucleus. The catalysed reaction is S-methyl-5'-thioadenosine + phosphate = 5-(methylsulfanyl)-alpha-D-ribose 1-phosphate + adenine. Its pathway is amino-acid biosynthesis; L-methionine biosynthesis via salvage pathway; S-methyl-5-thio-alpha-D-ribose 1-phosphate from S-methyl-5'-thioadenosine (phosphorylase route): step 1/1. In terms of biological role, catalyzes the reversible phosphorylation of S-methyl-5'-thioadenosine (MTA) to adenine and 5-methylthioribose-1-phosphate. Involved in the breakdown of MTA, a major by-product of polyamine biosynthesis. Responsible for the first step in the methionine salvage pathway after MTA has been generated from S-adenosylmethionine. Has broad substrate specificity with 6-aminopurine nucleosides as preferred substrates. This chain is S-methyl-5'-thioadenosine phosphorylase, found in Aspergillus fumigatus (strain ATCC MYA-4609 / CBS 101355 / FGSC A1100 / Af293) (Neosartorya fumigata).